A 1026-amino-acid chain; its full sequence is Leucine-rich repeat and coiled-coil domain-containing protein 1 (1026 aa).

5 LRR repeats span residues 39-60, 61-82, 83-104, 105-126, and 131-152; these read SIHAINLHCNNISKISSIDHIW, NLRHLDLSSNQISQIEGLNTLT, KLCTLNLSCNLITRVEGLEALV, NLTKLNLSYNHINDLSGLMPLH, and KLRYIDLHSNYIDSIHHLLQCT. Positions 170-212 constitute an LRRCT domain; the sequence is NPICLIPGYRAIILQTLPQLRILDCKNIFGEPVSLEEINSSHL. Residues 310 to 338 form a disordered region; sequence DNVPEKDLRPKRDTDITSESDYGNRRECS. The span at 312–324 shows a compositional bias: basic and acidic residues; sequence VPEKDLRPKRDTD. The stretch at 428–641 forms a coiled coil; sequence REMRWKAEQT…DLENEFRIAL (214 aa).

This sequence belongs to the LRRCC1 family.

Its subcellular location is the cytoplasm. The protein localises to the cytoskeleton. It localises to the microtubule organizing center. It is found in the centrosome. The protein resides in the centriole. Functionally, required for the organization of the mitotic spindle. Maintains the structural integrity of centrosomes during mitosis. The chain is Leucine-rich repeat and coiled-coil domain-containing protein 1 (Lrrcc1) from Mus musculus (Mouse).